Here is a 176-residue protein sequence, read N- to C-terminus: Large ribosomal subunit protein uL16 (176 aa).

This sequence belongs to the universal ribosomal protein uL16 family.

This chain is Large ribosomal subunit protein uL16, found in Picrophilus torridus (strain ATCC 700027 / DSM 9790 / JCM 10055 / NBRC 100828 / KAW 2/3).